We begin with the raw amino-acid sequence, 100 residues long: Urease subunit gamma (100 aa).

This sequence belongs to the urease gamma subunit family. Heterotrimer of UreA (gamma), UreB (beta) and UreC (alpha) subunits. Three heterotrimers associate to form the active enzyme.

It localises to the cytoplasm. It carries out the reaction urea + 2 H2O + H(+) = hydrogencarbonate + 2 NH4(+). It participates in nitrogen metabolism; urea degradation; CO(2) and NH(3) from urea (urease route): step 1/1. In Synechococcus sp. (strain RCC307), this protein is Urease subunit gamma.